A 105-amino-acid polypeptide reads, in one-letter code: Nucleoid-associated protein PTH_0052 (105 aa).

Belongs to the YbaB/EbfC family. In terms of assembly, homodimer.

The protein localises to the cytoplasm. The protein resides in the nucleoid. Functionally, binds to DNA and alters its conformation. May be involved in regulation of gene expression, nucleoid organization and DNA protection. This is Nucleoid-associated protein PTH_0052 from Pelotomaculum thermopropionicum (strain DSM 13744 / JCM 10971 / SI).